A 545-amino-acid chain; its full sequence is Chaperonin GroEL (545 aa).

Residues 30-33 (TLGP), Lys51, 87-91 (DGTTT), Gly415, and Asp496 each bind ATP. Residues 526 to 545 (PEPKAPAGGMPDMGGMGGMM) form a disordered region. Gly residues predominate over residues 536 to 545 (PDMGGMGGMM).

It belongs to the chaperonin (HSP60) family. As to quaternary structure, forms a cylinder of 14 subunits composed of two heptameric rings stacked back-to-back. Interacts with the co-chaperonin GroES.

Its subcellular location is the cytoplasm. It catalyses the reaction ATP + H2O + a folded polypeptide = ADP + phosphate + an unfolded polypeptide.. Its function is as follows. Together with its co-chaperonin GroES, plays an essential role in assisting protein folding. The GroEL-GroES system forms a nano-cage that allows encapsulation of the non-native substrate proteins and provides a physical environment optimized to promote and accelerate protein folding. The protein is Chaperonin GroEL of Paracoccus denitrificans (strain Pd 1222).